A 373-amino-acid polypeptide reads, in one-letter code: Leucine aminopeptidase 1 (373 aa).

Positions 1–18 are cleaved as a signal peptide; that stretch reads MKLLSVLALSATATSVLG. N136 is a glycosylation site (N-linked (GlcNAc...) asparagine). Residues H176 and D195 each coordinate Zn(2+). N196 carries an N-linked (GlcNAc...) asparagine glycan. Residues E234 and D261 each coordinate Zn(2+). The N-linked (GlcNAc...) asparagine glycan is linked to N284. A disulfide bridge links C310 with C314. H343 is a binding site for Zn(2+).

The protein belongs to the peptidase M28 family. M28E subfamily. As to quaternary structure, monomer. The cofactor is Zn(2+).

The protein resides in the secreted. In terms of biological role, extracellular aminopeptidase which contributes to pathogenicity. The sequence is that of Leucine aminopeptidase 1 (LAP1) from Trichophyton equinum (Horse ringworm fungus).